Reading from the N-terminus, the 510-residue chain is NAD(P)H-quinone oxidoreductase subunit 2 A, chloroplastic (510 aa).

13 helical membrane-spanning segments follow: residues 24–44 (LLLF…GLIL), 57–77 (IPWL…ALLF), 99–119 (IFQF…VEYI), 124–144 (MAIT…MFLC), 149–169 (LITI…LSGY), 183–203 (YLLM…WLYG), 227–247 (PGIS…LSPA), 295–315 (WHLL…LIAI), 323–343 (MLAY…IVGD), 354–374 (YMLF…LFGL), 395–415 (ALSL…AGFF), 418–438 (LYLF…IGLL), and 484–504 (MIVC…IIAI).

Belongs to the complex I subunit 2 family. As to quaternary structure, NDH is composed of at least 16 different subunits, 5 of which are encoded in the nucleus.

The protein localises to the plastid. Its subcellular location is the chloroplast thylakoid membrane. The catalysed reaction is a plastoquinone + NADH + (n+1) H(+)(in) = a plastoquinol + NAD(+) + n H(+)(out). It carries out the reaction a plastoquinone + NADPH + (n+1) H(+)(in) = a plastoquinol + NADP(+) + n H(+)(out). Its function is as follows. NDH shuttles electrons from NAD(P)H:plastoquinone, via FMN and iron-sulfur (Fe-S) centers, to quinones in the photosynthetic chain and possibly in a chloroplast respiratory chain. The immediate electron acceptor for the enzyme in this species is believed to be plastoquinone. Couples the redox reaction to proton translocation, and thus conserves the redox energy in a proton gradient. This is NAD(P)H-quinone oxidoreductase subunit 2 A, chloroplastic from Solanum bulbocastanum (Wild potato).